We begin with the raw amino-acid sequence, 303 residues long: Probable 5-dehydro-4-deoxyglucarate dehydratase (303 aa).

This sequence belongs to the DapA family.

It catalyses the reaction 5-dehydro-4-deoxy-D-glucarate + H(+) = 2,5-dioxopentanoate + CO2 + H2O. It functions in the pathway carbohydrate acid metabolism; D-glucarate degradation; 2,5-dioxopentanoate from D-glucarate: step 2/2. The chain is Probable 5-dehydro-4-deoxyglucarate dehydratase from Acinetobacter baumannii (strain AB307-0294).